The chain runs to 519 residues: Aspartokinase (519 aa).

Residue Ser326 is modified to Phosphoserine. Thr328 carries the phosphothreonine modification. The 83-residue stretch at 436–518 (LVGKHMRNTT…MLVEKPWLYS (83 aa)) folds into the ACT domain.

The protein belongs to the aspartokinase family.

The catalysed reaction is L-aspartate + ATP = 4-phospho-L-aspartate + ADP. It functions in the pathway amino-acid biosynthesis; L-methionine biosynthesis via de novo pathway; L-homoserine from L-aspartate: step 1/3. It participates in amino-acid biosynthesis; L-threonine biosynthesis; L-threonine from L-aspartate: step 1/5. Its function is as follows. Phosphorylates aspartate, the first step in the biosynthesis of amino acids that derive from aspartate (the aspartate family of amino acids), including methioinine and threonine, the latter of which is a precursor to isoleucine. The chain is Aspartokinase from Schizosaccharomyces pombe (strain 972 / ATCC 24843) (Fission yeast).